We begin with the raw amino-acid sequence, 567 residues long: Diacylglycerol kinase epsilon (567 aa).

The chain crosses the membrane as a helical span at residues 22-42 (LILWTLCSVLLPVFITFWCSL). 2 consecutive Phorbol-ester/DAG-type zinc fingers follow at residues 59–108 (KHGW…RFQC) and 124–177 (PHHW…NEKC). Residues 215–356 (KQWTPLIILA…LDRWKVQVTN (142 aa)) enclose the DAGKc domain.

The protein belongs to the eukaryotic diacylglycerol kinase family. In terms of tissue distribution, expressed predominantly in testis. Expressed in endothelium, platelets and podocytes (at protein level).

It localises to the membrane. Its subcellular location is the cytoplasm. It catalyses the reaction a 1,2-diacyl-sn-glycerol + ATP = a 1,2-diacyl-sn-glycero-3-phosphate + ADP + H(+). The enzyme catalyses 1-hexadecanoyl-2-(5Z,8Z,11Z,14Z-eicosatetraenoyl)-sn-glycerol + ATP = 1-hexadecanoyl-2-(5Z,8Z,11Z,14Z-eicosatetraenoyl)-sn-glycero-3-phosphate + ADP + H(+). The catalysed reaction is 1-octadecanoyl-2-(5Z,8Z,11Z,14Z-eicosatetraenoyl)-sn-glycerol + ATP = 1-octadecanoyl-2-(5Z,8Z,11Z,14Z-eicosatetraenoyl)-sn-glycero-3-phosphate + ADP + H(+). It carries out the reaction 1-eicosanoyl-2-(5Z,8Z,11Z,14Z)-eicosatetraenoyl-sn-glycerol + ATP = 1-eicosanoyl-2-(5Z,8Z,11Z,14Z)-eicosatetraenoyl-sn-glycero-3-phosphate + ADP + H(+). It catalyses the reaction 1,2-di-(5Z,8Z,11Z,14Z)-eicosatetraenoyl-sn-glycerol + ATP = 1,2-di-(5Z,8Z,11Z,14Z)-eicosatetraenoyl-sn-glycero-3-phosphate + ADP + H(+). The enzyme catalyses 1-octadecanoyl-2-(9Z,12Z)-octadecadienoyl-sn-glycerol + ATP = 1-octadecanoyl-2-(9Z,12Z-octadecadienoyl)-sn-glycero-3-phosphate + ADP + H(+). The catalysed reaction is 1,2-di-(9Z,12Z-octadecadienoyl)-sn-glycerol + ATP = 1,2-di-(9Z,12Z-octadecadienoyl)-sn-glycero-3-phosphate + ADP + H(+). It carries out the reaction 1,2-di-(9Z-octadecenoyl)-sn-glycerol + ATP = 1,2-di-(9Z-octadecenoyl)-sn-glycero-3-phosphate + ADP + H(+). Its pathway is lipid metabolism; glycerolipid metabolism. With respect to regulation, undergoes competitive inhibition by its own product 1,2-diacyl-sn-glycero-3-phosphate/phosphatidic acid. The strongest inhibition being observed in vitro with 1-octadecanoyl-2-(5Z,8Z,11Z,14Z-eicosatetraenoyl)-sn-glycero-3-phosphate, a major intermediate in the phosphatidylinositol turnover cycle and more generally by diacylglycerols with an arachidonoyl acyl chain at the sn-2 position. Membrane-bound diacylglycerol kinase that converts diacylglycerol/DAG into phosphatidic acid/phosphatidate/PA and regulates the respective levels of these two bioactive lipids. Thereby, acts as a central switch between the signaling pathways activated by these second messengers with different cellular targets and opposite effects in numerous biological processes. Also plays an important role in the biosynthesis of complex lipids. Displays specificity for diacylglycerol substrates with an arachidonoyl acyl chain at the sn-2 position, with the highest activity toward 1-octadecanoyl-2-(5Z,8Z,11Z,14Z-eicosatetraenoyl)-sn-glycerol the main diacylglycerol intermediate within the phosphatidylinositol turnover cycle. Can also phosphorylate diacylglycerol substrates with a linoleoyl acyl chain at the sn-2 position but much less efficiently. The sequence is that of Diacylglycerol kinase epsilon (DGKE) from Homo sapiens (Human).